A 218-amino-acid polypeptide reads, in one-letter code: Putative tRNA methyltransferase MG248 (218 aa).

It belongs to the TrmK family.

The protein localises to the cytoplasm. This Mycoplasma genitalium (strain ATCC 33530 / DSM 19775 / NCTC 10195 / G37) (Mycoplasmoides genitalium) protein is Putative tRNA methyltransferase MG248.